Here is a 129-residue protein sequence, read N- to C-terminus: Follitropin subunit beta (129 aa).

A signal peptide spans 1–18 (MKTLQFFFLFCCWKAICC). 6 disulfides stabilise this stretch: Cys21-Cys69, Cys35-Cys84, Cys38-Cys122, Cys46-Cys100, Cys50-Cys102, and Cys105-Cys112. Asn25 and Asn42 each carry an N-linked (GlcNAc...) asparagine glycan.

It belongs to the glycoprotein hormones subunit beta family. Heterodimer. The active follitropin is a heterodimer composed of an alpha chain/CGA shared with other hormones and a unique beta chain/FSHB shown here.

The protein resides in the secreted. Functionally, together with the alpha chain CGA constitutes follitropin, the follicle-stimulating hormone, and provides its biological specificity to the hormone heterodimer. Binds FSHR, a G protein-coupled receptor, on target cells to activate downstream signaling pathways. Follitropin is involved in follicle development and spermatogenesis in reproductive organs. This Homo sapiens (Human) protein is Follitropin subunit beta (FSHB).